The primary structure comprises 555 residues: Cinnamate beta-D-glucosyltransferase (555 aa).

The active-site Proton acceptor is the His-19. Residue His-19 participates in an anthocyanidin binding. Positions 344, 359, 362, 363, 364, and 367 each coordinate UDP-alpha-D-glucose. Gly-382 provides a ligand contact to an anthocyanidin. Asp-383 and Gln-384 together coordinate UDP-alpha-D-glucose.

The protein belongs to the UDP-glycosyltransferase family. As to expression, highest expression detected in fruit, with lower levels detected in flower and petiole. Barely detectable in leaf and root.

It carries out the reaction (E)-cinnamate + UDP-alpha-D-glucose = 1-O-(trans-cinnamoyl)-beta-D-glucose + UDP. Broad spectrum multifunctional glucosyltransferase. Catalyzes the formation of cinnamic acid and p-coumaric acid glucose esters during fruit ripening. Accepted substrates range from derivatives of cinnamic acid and benzoic acid to heterocyclic and aliphatic compounds, resulting in the formation of O- and S-glucose esters and O-glucosides. May also be involved in detoxification of xenobiotics. The polypeptide is Cinnamate beta-D-glucosyltransferase (Fragaria ananassa (Strawberry)).